The chain runs to 172 residues: Adenine phosphoribosyltransferase (172 aa).

It belongs to the purine/pyrimidine phosphoribosyltransferase family. In terms of assembly, homodimer.

Its subcellular location is the cytoplasm. It carries out the reaction AMP + diphosphate = 5-phospho-alpha-D-ribose 1-diphosphate + adenine. Its pathway is purine metabolism; AMP biosynthesis via salvage pathway; AMP from adenine: step 1/1. Catalyzes a salvage reaction resulting in the formation of AMP, that is energically less costly than de novo synthesis. The polypeptide is Adenine phosphoribosyltransferase (Staphylococcus aureus (strain bovine RF122 / ET3-1)).